Reading from the N-terminus, the 162-residue chain is Cytochrome c-type biogenesis protein CcmE (162 aa).

Residues 1–8 (MNPVRKKR) are Cytoplasmic-facing. Residues 9–29 (LIIVLAIVVGVGAAVGLALSA) traverse the membrane as a helical; Signal-anchor for type II membrane protein segment. Topologically, residues 30-162 (LQQNINLFYT…GETSYNQEGK (133 aa)) are periplasmic. Heme-binding residues include histidine 124 and tyrosine 128. Residues 139 to 148 (DSGQLKHYEN) show a composition bias toward basic and acidic residues. The interval 139–162 (DSGQLKHYENGKAAGETSYNQEGK) is disordered.

It belongs to the CcmE/CycJ family.

It localises to the cell inner membrane. Functionally, heme chaperone required for the biogenesis of c-type cytochromes. Transiently binds heme delivered by CcmC and transfers the heme to apo-cytochromes in a process facilitated by CcmF and CcmH. The protein is Cytochrome c-type biogenesis protein CcmE of Pseudomonas aeruginosa (strain LESB58).